Reading from the N-terminus, the 547-residue chain is MAAKEIIFSEKARSRMVHGVNLLANAVKATLGPKGRHVVLDKSFGSPIITKDGVSVAKEIELADKFENMGAQMLKEVASKTNDHAGDGTTTATVLAQALIREGCKAVAAGMNPMDLKRGIDKAVIAAVTELKKISKPTSDDKAIAQVATISANSDESIGNIIAEAMKKVGKEGVITIEEGTTLENELDVVEGMQFDRGYSSPYFINNQQSQIVELDNPYILLHDKKISSVRDLLTVLDAVAKESKPLLIVAEEVEGEALATLVVNNIRGIIKVCAVKAPGFGDRRKAMLEDMAVLTGGTVISEEVGLSLEKATTSHLGKAKKVRVSKENTTIIDGMGDNDAINGRVKQIKTQIEETTSDYDREKLQERVAKLAGGVAVIKVGAATEVEMKEKKARVDDALLATRAAVEEGVIPGGGVALIRAITAISNLKGANEDQTHGIQIALRAMEAPLREIVANAGEEPSVILNKVKEGKDNFGYNAATGEFGDMVNLGILDPTKVTRSALQNAASIAGLMITTEAMVAEAPKKDEPTPPAAGGGMGGMGGMDF.

Residues 30 to 33 (TLGP), lysine 51, 87 to 91 (DGTTT), glycine 415, 479 to 481 (NAA), and aspartate 495 each bind ATP. A disordered region spans residues 524 to 547 (APKKDEPTPPAAGGGMGGMGGMDF). Over residues 535–547 (AGGGMGGMGGMDF) the composition is skewed to gly residues.

The protein belongs to the chaperonin (HSP60) family. Forms a cylinder of 14 subunits composed of two heptameric rings stacked back-to-back. Interacts with the co-chaperonin GroES.

The protein resides in the cytoplasm. The enzyme catalyses ATP + H2O + a folded polypeptide = ADP + phosphate + an unfolded polypeptide.. In terms of biological role, together with its co-chaperonin GroES, plays an essential role in assisting protein folding. The GroEL-GroES system forms a nano-cage that allows encapsulation of the non-native substrate proteins and provides a physical environment optimized to promote and accelerate protein folding. This Xylella fastidiosa (strain M23) protein is Chaperonin GroEL.